Consider the following 1072-residue polypeptide: Carbamoyl phosphate synthase large chain (1072 aa).

The carboxyphosphate synthetic domain stretch occupies residues 1-401; it reads MPKRLDINTI…SLLKAVRSLE (401 aa). 12 residues coordinate ATP: Arg129, Arg169, Gly175, Gly176, Lys208, Ile210, Glu215, Gly241, Val242, His243, Gln284, and Glu298. In terms of domain architecture, ATP-grasp 1 spans 133–327; it reads RTLMQELNEP…IAKLAAKIAV (195 aa). The Mg(2+) site is built by Gln284, Glu298, and Asn300. Mn(2+) contacts are provided by Gln284, Glu298, and Asn300. The segment at 402–546 is oligomerization domain; sequence LGIYHLELNH…YSTYGDENES (145 aa). The tract at residues 547–929 is carbamoyl phosphate synthetic domain; sequence IVTERKSVMV…ALYKGLVAAG (383 aa). The ATP-grasp 2 domain maps to 671-861; that stretch reads EAALTELGIP…MANIATKVIL (191 aa). Arg707, Arg746, Glu752, Gly777, Val778, His779, Ser780, Gln820, and Glu832 together coordinate ATP. Positions 820, 832, and 834 each coordinate Mg(2+). Residues Gln820, Glu832, and Asn834 each coordinate Mn(2+). Residues 930–1072 enclose the MGS-like domain; the sequence is ISIPTHGSVI…PTTRHEVVHA (143 aa). The allosteric domain stretch occupies residues 930–1072; that stretch reads ISIPTHGSVI…PTTRHEVVHA (143 aa).

The protein belongs to the CarB family. In terms of assembly, composed of two chains; the small (or glutamine) chain promotes the hydrolysis of glutamine to ammonia, which is used by the large (or ammonia) chain to synthesize carbamoyl phosphate. Tetramer of heterodimers (alpha,beta)4. It depends on Mg(2+) as a cofactor. Mn(2+) is required as a cofactor.

It catalyses the reaction hydrogencarbonate + L-glutamine + 2 ATP + H2O = carbamoyl phosphate + L-glutamate + 2 ADP + phosphate + 2 H(+). It carries out the reaction hydrogencarbonate + NH4(+) + 2 ATP = carbamoyl phosphate + 2 ADP + phosphate + 2 H(+). It functions in the pathway amino-acid biosynthesis; L-arginine biosynthesis; carbamoyl phosphate from bicarbonate: step 1/1. It participates in pyrimidine metabolism; UMP biosynthesis via de novo pathway; (S)-dihydroorotate from bicarbonate: step 1/3. Functionally, large subunit of the glutamine-dependent carbamoyl phosphate synthetase (CPSase). CPSase catalyzes the formation of carbamoyl phosphate from the ammonia moiety of glutamine, carbonate, and phosphate donated by ATP, constituting the first step of 2 biosynthetic pathways, one leading to arginine and/or urea and the other to pyrimidine nucleotides. The large subunit (synthetase) binds the substrates ammonia (free or transferred from glutamine from the small subunit), hydrogencarbonate and ATP and carries out an ATP-coupled ligase reaction, activating hydrogencarbonate by forming carboxy phosphate which reacts with ammonia to form carbamoyl phosphate. This is Carbamoyl phosphate synthase large chain from Bacillus cytotoxicus (strain DSM 22905 / CIP 110041 / 391-98 / NVH 391-98).